A 365-amino-acid chain; its full sequence is S-type anion channel SLAH4 (365 aa).

Over 1 to 25 the chain is Cytoplasmic; it reads MEIPSQEIHIMIDNTISRRKERKTN. The chain crosses the membrane as a helical span at residues 26–46; that stretch reads LADAEPIVLMSVLSSLHAGYF. Residues 47-73 lie on the Extracellular side of the membrane; sequence RISLSLCSQALLWKIMVHLHSELPSMA. Residues 74-94 traverse the membrane as a helical segment; the sequence is YYLLWYLALATQVSLCFLYAF. Topologically, residues 95–106 are cytoplasmic; the sequence is KCIFLFDMVKEE. The helical transmembrane segment at 107–127 threads the bilayer; it reads FSHYIGVNYLYAPSISCLLLL. The Extracellular portion of the chain corresponds to 128–131; the sequence is QSAP. Residues 132-152 traverse the membrane as a helical segment; sequence MIEPHSVLYQTLFWIFAVPVL. Topologically, residues 153–168 are cytoplasmic; that stretch reads TLDTKLYGQWFTTEKR. Residues 169 to 189 form a helical membrane-spanning segment; it reads FLSIMANPASQVSVIANLVAA. Topologically, residues 190–199 are extracellular; that stretch reads RGAAEMGWKE. A helical membrane pass occupies residues 200 to 220; it reads CALCLFSLGMVHYLVIFVTLY. The Cytoplasmic segment spans residues 221-235; it reads QRLPGGNNFPTTLRP. The chain crosses the membrane as a helical span at residues 236–256; sequence VFFLFFAAPATASLAWNSICG. Position 257 (Asn-257) is a topological domain, extracellular. Residues 258 to 278 form a helical membrane-spanning segment; that stretch reads FDTIAKMLFFLSLFIFISLVC. The Cytoplasmic portion of the chain corresponds to 279–291; sequence RPNLLKKSIKRFN. Residues 292-312 traverse the membrane as a helical segment; that stretch reads VAWWAYSFPITFLALNSVQYA. Over 313 to 321 the chain is Extracellular; the sequence is QEVKDHVAS. The helical transmembrane segment at 322–342 threads the bilayer; sequence VLMFIFSSMSVLIFISVMLLT. The Cytoplasmic segment spans residues 343–365; the sequence is AANSKRLLRRDHVLWSSTGPKDK.

This sequence belongs to the SLAC1 S-type anion channel family. As to quaternary structure, homotrimer.

The protein localises to the cell membrane. Functionally, slow, weak voltage-dependent S-type anion efflux channel involved in maintenance of anion homeostasis. The chain is S-type anion channel SLAH4 (SLAH4) from Arabidopsis thaliana (Mouse-ear cress).